Here is a 1143-residue protein sequence, read N- to C-terminus: Disease resistance protein Piks-1 (1143 aa).

The tract at residues 1–190 (MEAAAMAVTA…PLRIMGGEMQ (190 aa)) is structured coiled coil (CC) domain. One can recognise an HMA domain in the interval 189–258 (MQKIVFKIPM…KVGPAMFLEV (70 aa)). An HMA-like domain region spans residues 191–264 (KIVFKIPMVD…FLEVSQAKED (74 aa)). Residues 282–570 (HEVKTICILG…WIAEGFVSEE (289 aa)) form the NB-ARC domain. 10 LRR repeats span residues 681 to 706 (FKRL…ICEQ), 708 to 731 (SLRV…MRKL), 732 to 754 (KHLE…IGEL), 756 to 777 (HLRI…IREL), 778 to 800 (QHLH…VGKL), 802 to 823 (NLKI…IGEL), 824 to 848 (NHLQ…QISQ), 945 to 968 (MPNL…INGT), 979 to 1002 (DSRV…EFKF), and 1004 to 1027 (AGPA…VFRC).

Belongs to the disease resistance NB-LRR family. In terms of assembly, interacts with AVR-Pik through its N-terminal part containing the HMA-like domain.

Its function is as follows. Disease resistance (R) protein that specifically recognizes the AVR-Pik effector avirulence protein from M.oryzae. Resistance proteins guard the plant against pathogens that contain an appropriate avirulence protein via an indirect interaction with this avirulence protein. That triggers a defense system including the hypersensitive response, which restricts the pathogen growth. The polypeptide is Disease resistance protein Piks-1 (Oryza sativa subsp. japonica (Rice)).